The primary structure comprises 158 residues: Putative pre-16S rRNA nuclease (158 aa).

The protein belongs to the YqgF nuclease family.

It is found in the cytoplasm. Functionally, could be a nuclease involved in processing of the 5'-end of pre-16S rRNA. This chain is Putative pre-16S rRNA nuclease, found in Paracoccus denitrificans (strain Pd 1222).